Reading from the N-terminus, the 102-residue chain is Fe-S protein maturation auxiliary factor YitW (102 aa).

Belongs to the MIP18 family.

Its function is as follows. Involved in the maturation of iron-sulfur (Fe-S) proteins. May function as a Fe-S cluster carrier. The polypeptide is Fe-S protein maturation auxiliary factor YitW (yitW) (Bacillus subtilis (strain 168)).